A 581-amino-acid polypeptide reads, in one-letter code: ATP-dependent lipid A-core flippase (581 aa).

6 helical membrane-spanning segments follow: residues 21–41 (TVAIVAIIGMIGYSGMDALFI), 65–85 (FVVIALVIGRGVFNFMSSYCL), 138–158 (ALLIVVREGAFVVFLLAVMFY), 161–181 (WQLSLIFLVIIPLVAVIVTVV), 246–266 (LSVSIIQVLAASAMAVILWVV), and 271–291 (MIDTISSGDFVVLISSMMMLL). The 283-residue stretch at 24–306 (IVAIIGMIGY…LANVNSDMQR (283 aa)) folds into the ABC transmembrane type-1 domain. Residues 338-575 (IEVKNVTFKY…NGTYSALCKM (238 aa)) enclose the ABC transporter domain. An ATP-binding site is contributed by 372-379 (GRSGSGKS).

The protein belongs to the ABC transporter superfamily. Lipid exporter (TC 3.A.1.106) family. In terms of assembly, homodimer.

It is found in the cell inner membrane. The enzyme catalyses ATP + H2O + lipid A-core oligosaccharideSide 1 = ADP + phosphate + lipid A-core oligosaccharideSide 2.. Its function is as follows. Involved in lipopolysaccharide (LPS) biosynthesis. Translocates lipid A-core from the inner to the outer leaflet of the inner membrane. Transmembrane domains (TMD) form a pore in the inner membrane and the ATP-binding domain (NBD) is responsible for energy generation. In Pseudoalteromonas translucida (strain TAC 125), this protein is ATP-dependent lipid A-core flippase.